A 396-amino-acid polypeptide reads, in one-letter code: L-lactate dehydrogenase (396 aa).

Positions 1 to 380 (MIISAASDYR…TQDSLVQGLG (380 aa)) constitute an FMN hydroxy acid dehydrogenase domain. Position 24 (Y24) interacts with substrate. The FMN site is built by S106 and Q127. Y129 contributes to the substrate binding site. Residue T155 participates in FMN binding. R164 provides a ligand contact to substrate. K251 provides a ligand contact to FMN. H275 serves as the catalytic Proton acceptor. Substrate is bound at residue R278. Residue 306–330 (DSGIRNGLDVVRMIALGADTVLLGR) participates in FMN binding.

It belongs to the FMN-dependent alpha-hydroxy acid dehydrogenase family. FMN serves as cofactor.

The protein resides in the cell inner membrane. The enzyme catalyses (S)-lactate + A = pyruvate + AH2. Its function is as follows. Catalyzes the conversion of L-lactate to pyruvate. Is coupled to the respiratory chain. The sequence is that of L-lactate dehydrogenase from Escherichia coli O7:K1 (strain IAI39 / ExPEC).